The chain runs to 283 residues: S-methyl-5'-thioadenosine phosphorylase (283 aa).

Threonine 18 contacts phosphate. At lysine 51 the chain carries N6-acetyllysine. Phosphate is bound by residues 60–61 and 93–94; these read RH and TA. Methionine 196 contributes to the substrate binding site. Position 197 (threonine 197) interacts with phosphate. 220–222 contributes to the substrate binding site; the sequence is DYD.

It belongs to the PNP/MTAP phosphorylase family. MTAP subfamily. As to quaternary structure, homotrimer. As to expression, ubiquitously expressed.

Its subcellular location is the cytoplasm. The protein localises to the nucleus. The catalysed reaction is S-methyl-5'-thioadenosine + phosphate = 5-(methylsulfanyl)-alpha-D-ribose 1-phosphate + adenine. Its pathway is amino-acid biosynthesis; L-methionine biosynthesis via salvage pathway; S-methyl-5-thio-alpha-D-ribose 1-phosphate from S-methyl-5'-thioadenosine (phosphorylase route): step 1/1. Its activity is regulated as follows. Inhibited by 5'-methylthiotubercin and 5'-chloroformycin. Functionally, catalyzes the reversible phosphorylation of S-methyl-5'-thioadenosine (MTA) to adenine and 5-methylthioribose-1-phosphate. Involved in the breakdown of MTA, a major by-product of polyamine biosynthesis. Responsible for the first step in the methionine salvage pathway after MTA has been generated from S-adenosylmethionine. Has broad substrate specificity with 6-aminopurine nucleosides as preferred substrates. The protein is S-methyl-5'-thioadenosine phosphorylase of Homo sapiens (Human).